The following is a 208-amino-acid chain: MAKVLYITAHPFNELVSNSMAAGKAFIETYQQQHPDDEVKHIDLFETYIPVIDKDVLTGWGKMSNGETLTDDEQMKVSRLSDILEEFLSADKYVFVTPMWNLSFPPVVKAYIDAISIAGKTFKYSAEGPQGLLTDKKVLHIQSRGGYYTEGPAADFEMGDRYLRTIMTFLGVPSYETIIIEGHNAEPHKTEEIKATSINNAEKLATIF.

FMN contacts are provided by residues Ser17–Ser19, Met99–Leu102, and Ser143–Gly146.

The protein belongs to the azoreductase type 1 family. As to quaternary structure, homodimer. It depends on FMN as a cofactor.

It catalyses the reaction 2 a quinone + NADH + H(+) = 2 a 1,4-benzosemiquinone + NAD(+). It carries out the reaction N,N-dimethyl-1,4-phenylenediamine + anthranilate + 2 NAD(+) = 2-(4-dimethylaminophenyl)diazenylbenzoate + 2 NADH + 2 H(+). Functionally, quinone reductase that provides resistance to thiol-specific stress caused by electrophilic quinones. Also exhibits azoreductase activity. Catalyzes the reductive cleavage of the azo bond in aromatic azo compounds to the corresponding amines. The protein is FMN-dependent NADH:quinone oxidoreductase of Staphylococcus aureus (strain MSSA476).